We begin with the raw amino-acid sequence, 625 residues long: Thrombopoietin receptor (625 aa).

A signal peptide spans 1 to 25; sequence MPSWALFMVTSCLLLALPNQAQVTS. Residues 26-482 lie on the Extracellular side of the membrane; sequence QDVFLLALGT…RVSTGSETAW (457 aa). A glycan (N-linked (GlcNAc...) asparagine) is linked at asparagine 117. Fibronectin type-III domains are found at residues 178–270 and 383–479; these read NATA…PVTV and PTPS…TGSE. Positions 465-469 match the WSXWS motif motif; it reads WSAWS. Residues 483 to 504 form a helical membrane-spanning segment; it reads ITLVTALLLVLSLSALLGLLLL. Residues 505–625 are Cytoplasmic-facing; that stretch reads KWQFPAHYRR…YLPLSYWQQP (121 aa). A Box 1 motif motif is present at residues 519–527; sequence LWPSLPDLH. Glycyl lysine isopeptide (Lys-Gly) (interchain with G-Cter in ubiquitin) cross-links involve residues lysine 544 and lysine 564. 2 positions are modified to phosphotyrosine: tyrosine 616 and tyrosine 621.

This sequence belongs to the type I cytokine receptor family. Type 1 subfamily. In terms of assembly, homodimer. Interacts with ATXN2L. Interacts with JAK2 and TYK2; these interactions increase MPL localization to the cell membrane. Interacts with THPO. Interacts with SHIP/INPP5D. Interacts with kinases BTK and SYK. Ubiquitination at Lys-544 and Lys-564 targets MPL for degradation by both the lysosomal and proteasomal pathways. The E3 ubiquitin-protein ligase CBL significantly contributes to this ubiquitination.

The protein localises to the cell membrane. The protein resides in the golgi apparatus. Its subcellular location is the cell surface. Receptor for thrombopoietin that regulates hematopoietic stem cell renewal, megakaryocyte differentiation, and platelet formation. Upon activation by THPO, induces rapid tyrosine phosphorylation and activation of JAK2, providing docking sites for many signaling proteins such as STAT5, SHIP/INPP5D, GRB2, SOS1 and PI3K. In turn, These signaling cascades lead to the proliferation, survival, and differentiation of megakaryocytes, ultimately leading to increased platelet production. Functionally, acts as an inhibitor of thrombopoietin signaling by promoting protein down-regulation of full-length isoform Mpl-fl. The protein is Thrombopoietin receptor (Mpl) of Mus musculus (Mouse).